Here is a 232-residue protein sequence, read N- to C-terminus: Phosphatidylserine decarboxylase proenzyme (232 aa).

The Schiff-base intermediate with substrate; via pyruvic acid role is filled by Ser-190. Pyruvic acid (Ser); by autocatalysis is present on Ser-190.

It belongs to the phosphatidylserine decarboxylase family. PSD-A subfamily. Heterodimer of a large membrane-associated beta subunit and a small pyruvoyl-containing alpha subunit. Requires pyruvate as cofactor. Is synthesized initially as an inactive proenzyme. Formation of the active enzyme involves a self-maturation process in which the active site pyruvoyl group is generated from an internal serine residue via an autocatalytic post-translational modification. Two non-identical subunits are generated from the proenzyme in this reaction, and the pyruvate is formed at the N-terminus of the alpha chain, which is derived from the carboxyl end of the proenzyme. The post-translation cleavage follows an unusual pathway, termed non-hydrolytic serinolysis, in which the side chain hydroxyl group of the serine supplies its oxygen atom to form the C-terminus of the beta chain, while the remainder of the serine residue undergoes an oxidative deamination to produce ammonia and the pyruvoyl prosthetic group on the alpha chain.

It is found in the cell membrane. It carries out the reaction a 1,2-diacyl-sn-glycero-3-phospho-L-serine + H(+) = a 1,2-diacyl-sn-glycero-3-phosphoethanolamine + CO2. It participates in phospholipid metabolism; phosphatidylethanolamine biosynthesis; phosphatidylethanolamine from CDP-diacylglycerol: step 2/2. Functionally, catalyzes the formation of phosphatidylethanolamine (PtdEtn) from phosphatidylserine (PtdSer). The polypeptide is Phosphatidylserine decarboxylase proenzyme (Allorhizobium ampelinum (strain ATCC BAA-846 / DSM 112012 / S4) (Agrobacterium vitis (strain S4))).